Here is a 695-residue protein sequence, read N- to C-terminus: Elongation factor G (695 aa).

The tr-type G domain maps to 10–285; it reads AKTRNIGIMA…AVIDYLPSPI (276 aa). GTP contacts are provided by residues 19 to 26, 83 to 87, and 137 to 140; these read AHIDAGKT, DTPGH, and NKMD.

This sequence belongs to the TRAFAC class translation factor GTPase superfamily. Classic translation factor GTPase family. EF-G/EF-2 subfamily.

It localises to the cytoplasm. Its function is as follows. Catalyzes the GTP-dependent ribosomal translocation step during translation elongation. During this step, the ribosome changes from the pre-translocational (PRE) to the post-translocational (POST) state as the newly formed A-site-bound peptidyl-tRNA and P-site-bound deacylated tRNA move to the P and E sites, respectively. Catalyzes the coordinated movement of the two tRNA molecules, the mRNA and conformational changes in the ribosome. The polypeptide is Elongation factor G (Limosilactobacillus reuteri (strain DSM 20016) (Lactobacillus reuteri)).